Here is a 355-residue protein sequence, read N- to C-terminus: Protein RecA (355 aa).

Residue 67–74 coordinates ATP; the sequence is GPESSGKT. The interval 336–355 is disordered; the sequence is NSAASDYEDNENEEMNNEEF. Positions 341–355 are enriched in acidic residues; sequence DYEDNENEEMNNEEF.

It belongs to the RecA family.

The protein resides in the cytoplasm. In terms of biological role, can catalyze the hydrolysis of ATP in the presence of single-stranded DNA, the ATP-dependent uptake of single-stranded DNA by duplex DNA, and the ATP-dependent hybridization of homologous single-stranded DNAs. It interacts with LexA causing its activation and leading to its autocatalytic cleavage. The polypeptide is Protein RecA (Photorhabdus laumondii subsp. laumondii (strain DSM 15139 / CIP 105565 / TT01) (Photorhabdus luminescens subsp. laumondii)).